A 241-amino-acid polypeptide reads, in one-letter code: Tetraspanin-1 (241 aa).

A run of 3 helical transmembrane segments spans residues 12–32, 53–73, and 89–109; these read ILFN…GIWV, FVNV…LGFL, and FFSI…VALV. N-linked (GlcNAc...) asparagine glycosylation occurs at Asn-154. The chain crosses the membrane as a helical span at residues 212-232; that stretch reads AVTVGGVAVGVAALELAAMVV.

Belongs to the tetraspanin (TM4SF) family. In terms of assembly, interacts with SLC19A2. Interacts with NTRK1/TRKA.

The protein resides in the cell membrane. It is found in the lysosome membrane. Structural component of specialized membrane microdomains known as tetraspanin-enriched microdomains (TERMs), which act as platforms for receptor clustering and signaling. Participates thereby in diverse biological functions such as cell signal transduction, adhesion, migration and protein trafficking. Regulates neuronal differentiation in response to NGF by facilitating NGF-mediated activation of NTRK1/TRKA receptor tyrosine kinase and subsequent downstream signaling pathways. Plays a role in the inhibition of TNFalpha-induced apoptosis. Mechanistically, inhibits the NF-kappa-B signaling pathway by blocking phosphorylation of CHUK. Also promotes the stability of the thiamine transporter 1/SLC19A2 in intestinal epithelial cells leading to an increase of thiamine uptake process. This Rattus norvegicus (Rat) protein is Tetraspanin-1 (Tspan1).